The sequence spans 217 residues: 25 kDa ookinete surface antigen (217 aa).

Positions 1–16 are cleaved as a signal peptide; the sequence is MNKLYSLFLFLFIQLS. The EGF-like 1; truncated domain occupies 30-59; it reads CKRGFLIQMSGHLECKCENDLVLVNEETCE. EGF-like domains lie at 61-106, 106-150, and 153-193; these read KVLK…NVCI, IPNE…NKCS, and GETK…SICT. Disulfide bonds link Cys-65–Cys-80, Cys-74–Cys-92, Cys-94–Cys-105, Cys-110–Cys-120, Cys-115–Cys-133, Cys-135–Cys-149, Cys-157–Cys-168, Cys-161–Cys-177, and Cys-179–Cys-192. Residue Asn-112 is glycosylated (N-linked (GlcNAc...) asparagine). Residues Asn-165 and Asn-187 are each glycosylated (N-linked (GlcNAc...) asparagine). Ser-196 carries the GPI-anchor amidated serine lipid modification. Positions 197–217 are cleaved as a propeptide — removed in mature form; it reads AYNILNLSIMFILFSVCFFIM. Asn-202 is a glycosylation site (N-linked (GlcNAc...) asparagine).

The protein localises to the cell membrane. This is 25 kDa ookinete surface antigen from Plasmodium falciparum (isolate NF54).